The primary structure comprises 485 residues: E3 ubiquitin-protein ligase rnf8 (485 aa).

An FHA domain is found at 43–97 (VSVGRGLNVTHQILSSSCPLMISRIHCVFKLNEGRQWTVTDNKSLNGVWVNGKRI). Positions 150–232 (AASLSQKLKN…SSTCSDSSQH (83 aa)) are disordered. The segment covering 199–219 (GERRETLKLSSRPLEEDRDKA) has biased composition (basic and acidic residues). The span at 221–230 (SSSSTCSDSS) shows a compositional bias: low complexity. The segment at 392–430 (CSICSELFIEAVTLNCAHSFCQHCISEWRNRKDKCPMCW) adopts an RING-type zinc-finger fold.

This sequence belongs to the RNF8 family. In terms of assembly, homodimer. Forms a E2-E3 ubiquitin ligase complex composed of the rnf8 homodimer and a E2 heterodimer of ube2n and ube2v2.

Its subcellular location is the nucleus. It catalyses the reaction S-ubiquitinyl-[E2 ubiquitin-conjugating enzyme]-L-cysteine + [acceptor protein]-L-lysine = [E2 ubiquitin-conjugating enzyme]-L-cysteine + N(6)-ubiquitinyl-[acceptor protein]-L-lysine.. It functions in the pathway protein modification; protein ubiquitination. Functionally, E3 ubiquitin-protein ligase that plays a key role in DNA damage signaling via 2 distinct roles: by mediating the 'Lys-63'-linked ubiquitination of histones H2A and H2AX and promoting the recruitment of DNA repair proteins at double-strand breaks (DSBs) sites, and by catalyzing 'Lys-48'-linked ubiquitination to remove target proteins from DNA damage sites. Following DNA DSBs, it is recruited to the sites of damage by ATM-phosphorylated mdc1 and catalyzes the 'Lys-63'-linked ubiquitination of histones H2A and H2AX. H2A ubiquitination also mediates the ATM-dependent transcriptional silencing at regions flanking DSBs in cis, a mechanism to avoid collision between transcription and repair intermediates. Also catalyzes the formation of 'Lys-48'-linked polyubiquitin chains, leading to degradation of substrate proteins. In addition to its function in damage signaling, also plays a role in higher-order chromatin structure by mediating extensive chromatin decondensation. This Danio rerio (Zebrafish) protein is E3 ubiquitin-protein ligase rnf8.